Reading from the N-terminus, the 273-residue chain is 3-keto-5-aminohexanoate cleavage enzyme (273 aa).

A (5S)-5-amino-3-oxohexanoate-binding site is contributed by Glu14. Positions 46 and 48 each coordinate Zn(2+). 3 residues coordinate (5S)-5-amino-3-oxohexanoate: Ser82, Gly85, and Ser106. Residue Glu227 participates in Zn(2+) binding.

Belongs to the BKACE family. Kce subfamily. In terms of assembly, homotetramer. It depends on Zn(2+) as a cofactor.

It catalyses the reaction (5S)-5-amino-3-oxohexanoate + acetyl-CoA = (3S)-3-aminobutanoyl-CoA + acetoacetate. The protein operates within amino-acid degradation; L-lysine degradation via acetate pathway. Functionally, involved in the anaerobic fermentation of lysine. Catalyzes the reversible reaction between 3-keto-5-aminohexanoate (KAH) and acetyl-CoA to form 3-aminobutyryl-CoA and acetoacetate. The reaction involves the deprotonation of KAH, the nucleophilic addition onto acetyl-CoA and the intramolecular transfer of the CoA moiety. This chain is 3-keto-5-aminohexanoate cleavage enzyme, found in Acetoanaerobium sticklandii (strain ATCC 12662 / DSM 519 / JCM 1433 / CCUG 9281 / NCIMB 10654 / HF) (Clostridium sticklandii).